A 171-amino-acid polypeptide reads, in one-letter code: tRNA-splicing endonuclease (171 aa).

Active-site residues include Tyr-110, His-117, and Lys-148.

It belongs to the tRNA-intron endonuclease family. Archaeal short subfamily. Homotetramer; although the tetramer contains four active sites, only two participate in the cleavage. Therefore, it should be considered as a dimer of dimers.

It catalyses the reaction pretRNA = a 3'-half-tRNA molecule with a 5'-OH end + a 5'-half-tRNA molecule with a 2',3'-cyclic phosphate end + an intron with a 2',3'-cyclic phosphate and a 5'-hydroxyl terminus.. Its function is as follows. Endonuclease that removes tRNA introns. Cleaves pre-tRNA at the 5'- and 3'-splice sites to release the intron. The products are an intron and two tRNA half-molecules bearing 2',3' cyclic phosphate and 5'-OH termini. Recognizes a pseudosymmetric substrate in which 2 bulged loops of 3 bases are separated by a stem of 4 bp. The polypeptide is tRNA-splicing endonuclease (Thermococcus onnurineus (strain NA1)).